Reading from the N-terminus, the 56-residue chain is 4Fe-4S ferredoxin FdxA (56 aa).

2 consecutive 4Fe-4S ferredoxin-type domains span residues 1–28 (MAYVINEACISCGACEPECPVNAISSGD) and 29–56 (DRYVIDADTCIDCGACAGVCPVDAPVQA). Positions 9, 12, 15, 19, 38, 41, 44, and 48 each coordinate [4Fe-4S] cluster.

It depends on [4Fe-4S] cluster as a cofactor.

Functionally, ferredoxins are iron-sulfur proteins that transfer electrons in a wide variety of metabolic reactions. This chain is 4Fe-4S ferredoxin FdxA, found in Gottschalkia acidurici (strain ATCC 7906 / DSM 604 / BCRC 14475 / CIP 104303 / KCTC 5404 / NCIMB 10678 / 9a) (Clostridium acidurici).